Here is a 143-residue protein sequence, read N- to C-terminus: Ribosome maturation factor RimP (143 aa).

It belongs to the RimP family.

It is found in the cytoplasm. Its function is as follows. Required for maturation of 30S ribosomal subunits. The protein is Ribosome maturation factor RimP of Nitrosomonas eutropha (strain DSM 101675 / C91 / Nm57).